Here is a 194-residue protein sequence, read N- to C-terminus: Peptidyl-tRNA hydrolase (194 aa).

Position 16 (Y16) interacts with tRNA. The active-site Proton acceptor is H21. TRNA-binding residues include F67, N69, and N115.

This sequence belongs to the PTH family. As to quaternary structure, monomer.

The protein localises to the cytoplasm. The enzyme catalyses an N-acyl-L-alpha-aminoacyl-tRNA + H2O = an N-acyl-L-amino acid + a tRNA + H(+). In terms of biological role, hydrolyzes ribosome-free peptidyl-tRNAs (with 1 or more amino acids incorporated), which drop off the ribosome during protein synthesis, or as a result of ribosome stalling. Functionally, catalyzes the release of premature peptidyl moieties from peptidyl-tRNA molecules trapped in stalled 50S ribosomal subunits, and thus maintains levels of free tRNAs and 50S ribosomes. This Shigella boydii serotype 4 (strain Sb227) protein is Peptidyl-tRNA hydrolase.